The chain runs to 265 residues: Metal-activated transcriptional activator protein AMT1 (265 aa).

The segment at residues 1–40 (MVVINGVKYACDSCIKSHKAAQCEHNDRPLKILKPRGRPP) is a DNA-binding region (copper-fist). Zn(2+) is bound by residues Cys-11, Cys-14, Cys-23, and His-25. The segment at 103 to 129 (RRKRTQKSNKKDNLSINSPTNNSPSPA) is disordered. A compositionally biased stretch (low complexity) spans 119–128 (NSPTNNSPSP).

Its subcellular location is the nucleus. Its function is as follows. Trans-acting regulatory protein that activates transcription of the MT genes (metallothionein) in response to copper or silver ions. This is Metal-activated transcriptional activator protein AMT1 (AMT1) from Candida glabrata (strain ATCC 2001 / BCRC 20586 / JCM 3761 / NBRC 0622 / NRRL Y-65 / CBS 138) (Yeast).